Reading from the N-terminus, the 217-residue chain is MSNPFLKQVFNKDKTFRPKRKFEPGTQRFELHKKAQASLNAGLDLKLAVQLPAGEELNDWVAVHVVDFFNRVNLIYGTISDGCTERSCPIMSGGPKYEYRWQDENKFRRPTALSAPRYMDLLMDWIEVQINNEDVFPTNVGTPFPKNFLQVVKKILSRLFRVFVHVYIHHFDRIAQLGSEAHVNTCYKHFYYFVTEFGLIDTKELEPLKEMTARMCH.

Residues Cys-83, Cys-88, His-165, and His-170 each coordinate Zn(2+).

The protein belongs to the MOB1/phocein family.

Its function is as follows. May regulate the activity of kinases. The sequence is that of MOB kinase activator 3A (MOB3A) from Bos taurus (Bovine).